Here is a 146-residue protein sequence, read N- to C-terminus: Acidic phospholipase A2 S8-51 (146 aa).

The first 19 residues, 1–19 (MYPAHLLVLLAVCVSLLGA), serve as a signal peptide directing secretion. The propeptide occupies 20–27 (ASIPPQPL). Disulfide bonds link Cys38/Cys98, Cys54/Cys145, Cys56/Cys72, Cys71/Cys126, Cys78/Cys119, Cys87/Cys112, and Cys105/Cys117. Ca(2+)-binding residues include Tyr55, Gly57, and Gly59. Residue His75 is part of the active site. Asp76 is a Ca(2+) binding site. Asp120 is a catalytic residue.

Belongs to the phospholipase A2 family. Group I subfamily. D49 sub-subfamily. It depends on Ca(2+) as a cofactor. As to expression, expressed by the venom gland.

It is found in the secreted. The enzyme catalyses a 1,2-diacyl-sn-glycero-3-phosphocholine + H2O = a 1-acyl-sn-glycero-3-phosphocholine + a fatty acid + H(+). Its function is as follows. Snake venom phospholipase A2 (PLA2) that inhibits collagen-induced platelet aggregation. PLA2 catalyzes the calcium-dependent hydrolysis of the 2-acyl groups in 3-sn-phosphoglycerides. This chain is Acidic phospholipase A2 S8-51, found in Austrelaps superbus (Lowland copperhead snake).